A 508-amino-acid chain; its full sequence is Fc receptor-like protein 2 (508 aa).

The first 19 residues, 1 to 19, serve as a signal peptide directing secretion; the sequence is MLLWSLLVIFDAVTEQADS. Ig-like C2-type domains lie at 20 to 98, 109 to 187, 201 to 290, and 300 to 387; these read LTLV…SNIV, PVLT…HRIR, PISN…KVVN, and PVLT…VSIS. The Extracellular segment spans residues 20-401; the sequence is LTLVAPSSVF…YRRDLMTAGV (382 aa). Cys-128 and Cys-177 form a disulfide bridge. N-linked (GlcNAc...) asparagine glycosylation is found at Asn-204, Asn-234, Asn-343, Asn-355, and Asn-365. 2 cysteine pairs are disulfide-bonded: Cys-226/Cys-275 and Cys-321/Cys-368. Residues 402–422 traverse the membrane as a helical segment; it reads LWGLFGVLGFTGVALLLYALF. Residues 423 to 508 are Cytoplasmic-facing; that stretch reads HKISGESSAT…QVIYSSVKKS (86 aa). The segment at 429 to 453 is disordered; the sequence is SSATNEPRGASRPNPQEFTYSSPTP. Over residues 441-452 the composition is skewed to polar residues; that stretch reads PNPQEFTYSSPT. 4 consecutive short sequence motifs (ITIM motif) follow at residues 446-451, 460-465, 472-477, and 500-505; these read FTYSSP, PVYVNV, VVYSQV, and VIYSSV.

As to quaternary structure, the tyrosine-phosphorylated isoform 2 interacts with PTPN6. In terms of processing, isoform 2 is N- and O-glycosylated, and phosphorylated. As to expression, expressed in the secondary lymphoid organs, spleen and lymph node. Expression is limited to the mature B-cell lines. Highly expressed in CD19 and within the mantle zones of the tonsil tissue. Isoform 2 is expressed in the spleen, peripheral blood and bone marrow. Isoform 2 and isoform 4 are expressed in B-cell lines. Preferentially expressed in memory B-cells (at protein level).

It is found in the cell membrane. Its function is as follows. May have an regulatory role in normal and neoplastic B cell development. The chain is Fc receptor-like protein 2 (FCRL2) from Homo sapiens (Human).